Reading from the N-terminus, the 90-residue chain is MALDSAKKAEIVAKFAKKPGDTGSTEVQVALLTARIAELTEHLKIYKKDFSSRLGLLKLVGQRKRLLSYLKRKDYNSYSKLITELNLRDK.

Belongs to the universal ribosomal protein uS15 family. In terms of assembly, part of the 30S ribosomal subunit. Forms a bridge to the 50S subunit in the 70S ribosome, contacting the 23S rRNA.

One of the primary rRNA binding proteins, it binds directly to 16S rRNA where it helps nucleate assembly of the platform of the 30S subunit by binding and bridging several RNA helices of the 16S rRNA. In terms of biological role, forms an intersubunit bridge (bridge B4) with the 23S rRNA of the 50S subunit in the ribosome. In Campylobacter jejuni subsp. jejuni serotype O:6 (strain 81116 / NCTC 11828), this protein is Small ribosomal subunit protein uS15.